The following is a 220-amino-acid chain: Ribosomal RNA small subunit methyltransferase J (220 aa).

Residues 55–56, 71–72, and aspartate 123 each bind S-adenosyl-L-methionine; these read RD and ER.

This sequence belongs to the methyltransferase superfamily. RsmJ family.

It localises to the cytoplasm. It carries out the reaction guanosine(1516) in 16S rRNA + S-adenosyl-L-methionine = N(2)-methylguanosine(1516) in 16S rRNA + S-adenosyl-L-homocysteine + H(+). Functionally, specifically methylates the guanosine in position 1516 of 16S rRNA. The chain is Ribosomal RNA small subunit methyltransferase J from Rhodopseudomonas palustris (strain BisB5).